We begin with the raw amino-acid sequence, 881 residues long: Phosphoinositide 3-kinase regulatory subunit 5 (881 aa).

The tract at residues S23–L99 is heterodimerization. Disordered stretches follow at residues P312–S339 and P472–T499. Over residues E316–T330 the composition is skewed to acidic residues. The interaction with G beta gamma proteins stretch occupies residues P657–S757.

In terms of assembly, heterodimer. Interacts with a catalytic subunit and with G beta gamma proteins.

The protein resides in the nucleus. It is found in the cytoplasm. The protein localises to the cell membrane. Its activity is regulated as follows. Greatly activated by G gamma proteins. Its function is as follows. Regulatory subunit of the PI3K gamma complex. This chain is Phosphoinositide 3-kinase regulatory subunit 5 (PIK3R5), found in Gallus gallus (Chicken).